The following is a 103-amino-acid chain: MQTQKIRIRLKAYDYALIDRSAQEIVETAKRTGAVVKGPIPLPTKIERFNILRSPHMNKTSREQLEIRTHLRLMDIVDWTDKTTDALMKLDLPAGVDVEIKVQ.

It belongs to the universal ribosomal protein uS10 family. In terms of assembly, part of the 30S ribosomal subunit.

Its function is as follows. Involved in the binding of tRNA to the ribosomes. This Neisseria gonorrhoeae protein is Small ribosomal subunit protein uS10.